The chain runs to 134 residues: Profilin-2 (134 aa).

Cysteine 13 and cysteine 118 are disulfide-bonded. Residues 84-100 (AVIRGKKGSGGITIKKT) carry the Involved in PIP2 interaction motif. Threonine 114 bears the Phosphothreonine mark.

This sequence belongs to the profilin family. Post-translationally, phosphorylated by MAP kinases.

The protein resides in the cytoplasm. It is found in the cytoskeleton. This Olea europaea (Common olive) protein is Profilin-2.